A 726-amino-acid polypeptide reads, in one-letter code: Dipeptidyl-peptidase 5 (726 aa).

A signal peptide spans 1–19 (MAAAKWLIASLAFASSGLA). 2 N-linked (GlcNAc...) asparagine glycosylation sites follow: asparagine 96 and asparagine 252. Residues 269-291 (AEPINKRNGPRTPQAIEGASSSP) are disordered. Residue serine 558 is the Charge relay system of the active site. Asparagine 605 is a glycosylation site (N-linked (GlcNAc...) asparagine). Catalysis depends on charge relay system residues aspartate 641 and histidine 673. The N-linked (GlcNAc...) asparagine glycan is linked to asparagine 699.

This sequence belongs to the peptidase S9C family.

The protein localises to the secreted. In terms of biological role, extracellular dipeptidyl-peptidase which removes N-terminal dipeptides sequentially from polypeptides having unsubstituted N-termini. Contributes to pathogenicity. The sequence is that of Dipeptidyl-peptidase 5 (DPP5) from Trichophyton equinum (Horse ringworm fungus).